The following is a 259-amino-acid chain: Imidazole glycerol phosphate synthase subunit HisF (259 aa).

Residues aspartate 11 and aspartate 130 contribute to the active site.

Belongs to the HisA/HisF family. Heterodimer of HisH and HisF.

It is found in the cytoplasm. It catalyses the reaction 5-[(5-phospho-1-deoxy-D-ribulos-1-ylimino)methylamino]-1-(5-phospho-beta-D-ribosyl)imidazole-4-carboxamide + L-glutamine = D-erythro-1-(imidazol-4-yl)glycerol 3-phosphate + 5-amino-1-(5-phospho-beta-D-ribosyl)imidazole-4-carboxamide + L-glutamate + H(+). Its pathway is amino-acid biosynthesis; L-histidine biosynthesis; L-histidine from 5-phospho-alpha-D-ribose 1-diphosphate: step 5/9. IGPS catalyzes the conversion of PRFAR and glutamine to IGP, AICAR and glutamate. The HisF subunit catalyzes the cyclization activity that produces IGP and AICAR from PRFAR using the ammonia provided by the HisH subunit. The polypeptide is Imidazole glycerol phosphate synthase subunit HisF (Carboxydothermus hydrogenoformans (strain ATCC BAA-161 / DSM 6008 / Z-2901)).